The sequence spans 544 residues: Chaperonin GroEL (544 aa).

ATP contacts are provided by residues 29-32, 86-90, Gly413, 476-478, and Asp492; these read TLGP, DGTTT, and NAA.

The protein belongs to the chaperonin (HSP60) family. As to quaternary structure, forms a cylinder of 14 subunits composed of two heptameric rings stacked back-to-back. Interacts with the co-chaperonin GroES.

It is found in the cytoplasm. The catalysed reaction is ATP + H2O + a folded polypeptide = ADP + phosphate + an unfolded polypeptide.. Functionally, together with its co-chaperonin GroES, plays an essential role in assisting protein folding. The GroEL-GroES system forms a nano-cage that allows encapsulation of the non-native substrate proteins and provides a physical environment optimized to promote and accelerate protein folding. The polypeptide is Chaperonin GroEL (Bacillus cereus (strain B4264)).